A 141-amino-acid chain; its full sequence is Transcription antitermination protein NusB (141 aa).

Belongs to the NusB family.

In terms of biological role, involved in transcription antitermination. Required for transcription of ribosomal RNA (rRNA) genes. Binds specifically to the boxA antiterminator sequence of the ribosomal RNA (rrn) operons. The sequence is that of Transcription antitermination protein NusB from Neisseria meningitidis serogroup C (strain 053442).